The chain runs to 250 residues: 3-deoxy-manno-octulosonate cytidylyltransferase (250 aa).

This sequence belongs to the KdsB family.

The protein localises to the cytoplasm. It catalyses the reaction 3-deoxy-alpha-D-manno-oct-2-ulosonate + CTP = CMP-3-deoxy-beta-D-manno-octulosonate + diphosphate. The protein operates within nucleotide-sugar biosynthesis; CMP-3-deoxy-D-manno-octulosonate biosynthesis; CMP-3-deoxy-D-manno-octulosonate from 3-deoxy-D-manno-octulosonate and CTP: step 1/1. Its pathway is bacterial outer membrane biogenesis; lipopolysaccharide biosynthesis. Activates KDO (a required 8-carbon sugar) for incorporation into bacterial lipopolysaccharide in Gram-negative bacteria. This chain is 3-deoxy-manno-octulosonate cytidylyltransferase, found in Sinorhizobium medicae (strain WSM419) (Ensifer medicae).